Reading from the N-terminus, the 193-residue chain is Superoxide dismutase [Fe] (193 aa).

Fe cation is bound by residues histidine 27, histidine 74, aspartate 157, and histidine 161.

The protein belongs to the iron/manganese superoxide dismutase family. In terms of assembly, homodimer. The cofactor is Fe cation.

The enzyme catalyses 2 superoxide + 2 H(+) = H2O2 + O2. Destroys superoxide anion radicals which are normally produced within the cells and which are toxic to biological systems. This is Superoxide dismutase [Fe] (sodB) from Coxiella burnetii (strain RSA 493 / Nine Mile phase I).